The sequence spans 161 residues: Cysteine dioxygenase (161 aa).

Fe cation contacts are provided by His-75, His-77, and His-125.

Belongs to the cysteine dioxygenase family. It depends on Fe cation as a cofactor.

It carries out the reaction L-cysteine + O2 = 3-sulfino-L-alanine + H(+). This Bacillus subtilis (strain 168) protein is Cysteine dioxygenase (cdoA).